Here is a 406-residue protein sequence, read N- to C-terminus: Ubiquitin-like modifier-activating enzyme 5 (406 aa).

ATP contacts are provided by G82, D103, K126, N149, and N183. Zn(2+)-binding residues include C225 and C228. C249 serves as the catalytic Glycyl thioester intermediate. The Zn(2+) site is built by C302 and C307. Residues 373-397 (EAPSKSTETTSEATTTTTGDETSLD) form a disordered region. Residues 378–393 (STETTSEATTTTTGDE) show a composition bias toward low complexity.

It belongs to the ubiquitin-activating E1 family. UBA5 subfamily.

E1-like enzyme which activates UFM1. The sequence is that of Ubiquitin-like modifier-activating enzyme 5 from Drosophila willistoni (Fruit fly).